The chain runs to 208 residues: GATA transcription factor 29 (208 aa).

The GATA-type; atypical zinc-finger motif lies at 155–208 (GMKKCTNMNCNALNTPMWRRGPLGPKSLCNACGIKFRKEEERKAKRNVVIVLDD).

It belongs to the type IV zinc-finger family. Class B subfamily.

The protein resides in the nucleus. Its function is as follows. Transcriptional regulator that specifically binds 5'-GATA-3' or 5'-GAT-3' motifs within gene promoters. This is GATA transcription factor 29 (GATA29) from Arabidopsis thaliana (Mouse-ear cress).